Consider the following 266-residue polypeptide: Undecaprenyl-diphosphatase (266 aa).

The next 8 helical transmembrane spans lie at 1 to 21 (METF…FLPI), 39 to 59 (QGFS…VIYF), 87 to 107 (WWII…KDFI), 111 to 131 (LRNT…LWWA), 149 to 169 (ALLI…RSGA), 183 to 203 (AAAK…AILV), 218 to 238 (ALGI…YYFL), and 246 to 266 (MTPF…LILW).

The protein belongs to the UppP family.

The protein localises to the cell inner membrane. It catalyses the reaction di-trans,octa-cis-undecaprenyl diphosphate + H2O = di-trans,octa-cis-undecaprenyl phosphate + phosphate + H(+). In terms of biological role, catalyzes the dephosphorylation of undecaprenyl diphosphate (UPP). Confers resistance to bacitracin. The sequence is that of Undecaprenyl-diphosphatase from Shewanella denitrificans (strain OS217 / ATCC BAA-1090 / DSM 15013).